The primary structure comprises 260 residues: Circadian clock-controlled protein daywake (260 aa).

Residues 1–25 (MQLTSASVCLLWMGLLSWVSHRIDA) form the signal peptide.

Belongs to the TO family.

Its function is as follows. Component of the circadian clock or downstream effector of clock function. Required for suppressing daytime sleep (siesta) under ambient environmental temperatures. Part of a heat avoidance mechanism that modulates daytime sleep behavior under different environmental temperatures to minimize the risk of heat exposure. Under cooler ambient temperatures, suppresses daytime sleep (siesta) and thus allows for longer periods of daytime activity. This is Circadian clock-controlled protein daywake from Drosophila yakuba (Fruit fly).